The primary structure comprises 49 residues: Large ribosomal subunit protein bL33B (49 aa).

This sequence belongs to the bacterial ribosomal protein bL33 family.

The sequence is that of Large ribosomal subunit protein bL33B from Shouchella clausii (strain KSM-K16) (Alkalihalobacillus clausii).